The following is a 455-amino-acid chain: Ornithine decarboxylase (455 aa).

Lys67 bears the N6-(pyridoxal phosphate)lysine mark. Pyridoxal 5'-phosphate contacts are provided by residues Ser197, Gly234, and 271–274; that span reads EPGR. Ser297 is subject to Phosphoserine; by CK2. 325-326 serves as a coordination point for substrate; it reads YD. The active-site Proton donor; shared with dimeric partner is Cys354. Cys354 is modified (S-nitrosocysteine). Asp355 serves as a coordination point for substrate. Tyr383 is a binding site for pyridoxal 5'-phosphate.

Belongs to the Orn/Lys/Arg decarboxylase class-II family. As to quaternary structure, homodimer. Only the dimer is catalytically active, as the active sites are constructed of residues from both monomers. The cofactor is pyridoxal 5'-phosphate.

It carries out the reaction L-ornithine + H(+) = putrescine + CO2. It participates in amine and polyamine biosynthesis; putrescine biosynthesis via L-ornithine pathway; putrescine from L-ornithine: step 1/1. Inhibited by antizymes (AZs) OAZ1, OAZ2 and OAZ3 in response to polyamine levels. AZs inhibit the assembly of the functional homodimer by binding to ODC monomers. Additionally, OAZ1 targets ODC monomers for ubiquitin-independent proteolytic destruction by the 26S proteasome. In terms of biological role, catalyzes the first and rate-limiting step of polyamine biosynthesis that converts ornithine into putrescine, which is the precursor for the polyamines, spermidine and spermine. Polyamines are essential for cell proliferation and are implicated in cellular processes, ranging from DNA replication to apoptosis. This chain is Ornithine decarboxylase (ODC1), found in Cricetulus griseus (Chinese hamster).